Here is a 199-residue protein sequence, read N- to C-terminus: Protein-methionine-sulfoxide reductase heme-binding subunit MsrQ (199 aa).

4 consecutive transmembrane segments (helical) span residues 8-28 (IIWLKVCLHLVGFLPLLWLFW), 82-102 (LWCFVWATLHLTSYALLELGI), 116-136 (PYLTLGIISWLALLALTLTST), and 153-173 (VVYLVAILAPVHYLWSVKVLS).

The protein belongs to the MsrQ family. Heterodimer of a catalytic subunit (MsrP) and a heme-binding subunit (MsrQ). Requires FMN as cofactor. It depends on heme b as a cofactor.

The protein localises to the cell inner membrane. Functionally, part of the MsrPQ system that repairs oxidized periplasmic proteins containing methionine sulfoxide residues (Met-O), using respiratory chain electrons. Thus protects these proteins from oxidative-stress damage caused by reactive species of oxygen and chlorine generated by the host defense mechanisms. MsrPQ is essential for the maintenance of envelope integrity under bleach stress, rescuing a wide series of structurally unrelated periplasmic proteins from methionine oxidation, including the primary periplasmic chaperone SurA and the lipoprotein Pal. MsrQ provides electrons for reduction to the reductase catalytic subunit MsrP, using the quinone pool of the respiratory chain. The polypeptide is Protein-methionine-sulfoxide reductase heme-binding subunit MsrQ (Salmonella arizonae (strain ATCC BAA-731 / CDC346-86 / RSK2980)).